A 211-amino-acid polypeptide reads, in one-letter code: Intermembrane phospholipid transport system binding protein MlaC (211 aa).

The signal sequence occupies residues Met1–Ala21.

Belongs to the MlaC/ttg2D family. Interacts with the MlaA-OmpF outer membrane complex and with the inner membrane ABC transporter complex MlaFEDB, via direct interaction with MlaD.

It localises to the periplasm. In terms of biological role, involved in a phospholipid transport pathway that maintains lipid asymmetry in the outer membrane by retrograde trafficking of phospholipids from the outer membrane to the inner membrane. May transfer phospholipid across the periplasmic space and deliver it to the MlaFEDB complex at the inner membrane. The sequence is that of Intermembrane phospholipid transport system binding protein MlaC from Escherichia coli (strain K12).